The chain runs to 692 residues: DNA ligase (692 aa).

Residues 35-39 (DLVYD), 88-89 (SL), and glutamate 117 contribute to the NAD(+) site. Lysine 119 functions as the N6-AMP-lysine intermediate in the catalytic mechanism. NAD(+)-binding residues include arginine 140, glutamate 176, lysine 301, and lysine 325. The Zn(2+) site is built by cysteine 416, cysteine 419, cysteine 434, and cysteine 439. Positions 611–692 (LTNQSNSWAS…FDLIKNSKKT (82 aa)) constitute a BRCT domain.

The protein belongs to the NAD-dependent DNA ligase family. LigA subfamily. Mg(2+) serves as cofactor. It depends on Mn(2+) as a cofactor.

The enzyme catalyses NAD(+) + (deoxyribonucleotide)n-3'-hydroxyl + 5'-phospho-(deoxyribonucleotide)m = (deoxyribonucleotide)n+m + AMP + beta-nicotinamide D-nucleotide.. Functionally, DNA ligase that catalyzes the formation of phosphodiester linkages between 5'-phosphoryl and 3'-hydroxyl groups in double-stranded DNA using NAD as a coenzyme and as the energy source for the reaction. It is essential for DNA replication and repair of damaged DNA. This Mesomycoplasma hyopneumoniae (strain 232) (Mycoplasma hyopneumoniae) protein is DNA ligase.